Consider the following 261-residue polypeptide: Glucose 1-dehydrogenase A (261 aa).

An NADP(+)-binding site is contributed by 11–35; sequence VITGGSTGLGRAMAVRFGQEEAKVV. Serine 145 contacts substrate. The active-site Proton acceptor is tyrosine 158.

The protein belongs to the short-chain dehydrogenases/reductases (SDR) family. Homotetramer.

The enzyme catalyses D-glucose + NAD(+) = D-glucono-1,5-lactone + NADH + H(+). It carries out the reaction D-glucose + NADP(+) = D-glucono-1,5-lactone + NADPH + H(+). The polypeptide is Glucose 1-dehydrogenase A (gdhA) (Priestia megaterium (Bacillus megaterium)).